A 59-amino-acid chain; its full sequence is UPF0434 protein Ping_0902 (59 aa).

The protein belongs to the UPF0434 family.

In Psychromonas ingrahamii (strain DSM 17664 / CCUG 51855 / 37), this protein is UPF0434 protein Ping_0902.